The chain runs to 208 residues: Small ribosomal subunit protein uS4 (208 aa).

A disordered region spans residues S31–S51. The region spanning R98–Q156 is the S4 RNA-binding domain.

Belongs to the universal ribosomal protein uS4 family. In terms of assembly, part of the 30S ribosomal subunit. Contacts protein S5. The interaction surface between S4 and S5 is involved in control of translational fidelity.

In terms of biological role, one of the primary rRNA binding proteins, it binds directly to 16S rRNA where it nucleates assembly of the body of the 30S subunit. Its function is as follows. With S5 and S12 plays an important role in translational accuracy. This Helicobacter pylori (strain HPAG1) protein is Small ribosomal subunit protein uS4.